The primary structure comprises 337 residues: tRNA N6-adenosine threonylcarbamoyltransferase (337 aa).

Residues His111 and His115 each coordinate Fe cation. Substrate is bound by residues 134 to 138 (LVSGG), Asp167, Gly180, and Asn272. Position 300 (Asp300) interacts with Fe cation.

Belongs to the KAE1 / TsaD family. It depends on Fe(2+) as a cofactor.

Its subcellular location is the cytoplasm. The enzyme catalyses L-threonylcarbamoyladenylate + adenosine(37) in tRNA = N(6)-L-threonylcarbamoyladenosine(37) in tRNA + AMP + H(+). Its function is as follows. Required for the formation of a threonylcarbamoyl group on adenosine at position 37 (t(6)A37) in tRNAs that read codons beginning with adenine. Is involved in the transfer of the threonylcarbamoyl moiety of threonylcarbamoyl-AMP (TC-AMP) to the N6 group of A37, together with TsaE and TsaB. TsaD likely plays a direct catalytic role in this reaction. This Escherichia coli (strain SMS-3-5 / SECEC) protein is tRNA N6-adenosine threonylcarbamoyltransferase.